Reading from the N-terminus, the 92-residue chain is Small ribosomal subunit protein uS19 (92 aa).

The protein belongs to the universal ribosomal protein uS19 family.

In terms of biological role, protein S19 forms a complex with S13 that binds strongly to the 16S ribosomal RNA. This Caulobacter vibrioides (strain ATCC 19089 / CIP 103742 / CB 15) (Caulobacter crescentus) protein is Small ribosomal subunit protein uS19.